Reading from the N-terminus, the 299-residue chain is Bifunctional phosphoglucose/phosphomannose isomerase (299 aa).

The SIS domain maps to 27–177 (DEVEITPSSR…IHKLMEDFQK (151 aa)). Residues glycine 44, serine 45, serine 84, serine 86, threonine 89, and arginine 132 each contribute to the D-fructose 6-phosphate site. Glutamate 200 serves as the catalytic Proton acceptor. Residues histidine 216 and lysine 295 each coordinate D-fructose 6-phosphate. Catalysis depends on histidine 216, which acts as the Proton donor. Lysine 295 functions as the Proton acceptor in the catalytic mechanism.

It belongs to the PGI/PMI family. Homodimer.

It carries out the reaction alpha-D-glucose 6-phosphate = beta-D-fructose 6-phosphate. The catalysed reaction is D-mannose 6-phosphate = D-fructose 6-phosphate. With respect to regulation, presence or absence of metal ions or EDTA does not significantly affect the phosphoglucose isomerase activity. Functionally, dual specificity isomerase that catalyzes the isomerization of both glucose-6-phosphate and mannose-6-phosphate to fructose-6-phosphate with nearly similar catalytic efficiency. Also catalyzes the epimerization of mannose 6-phosphate to glucose 6-phosphate but the rate of epimerization reaction is 20-fold lower than that of isomerization reaction. The polypeptide is Bifunctional phosphoglucose/phosphomannose isomerase (Pyrobaculum calidifontis (strain DSM 21063 / JCM 11548 / VA1)).